The primary structure comprises 377 residues: Glutamate 5-kinase (377 aa).

K20 is an ATP binding site. 3 residues coordinate substrate: S60, D147, and N159. Position 179 to 180 (179 to 180 (SD)) interacts with ATP. Residues 281–355 (HGQLHLDAGA…GQSTSDLPEF (75 aa)) enclose the PUA domain.

Belongs to the glutamate 5-kinase family.

It is found in the cytoplasm. The enzyme catalyses L-glutamate + ATP = L-glutamyl 5-phosphate + ADP. Its pathway is amino-acid biosynthesis; L-proline biosynthesis; L-glutamate 5-semialdehyde from L-glutamate: step 1/2. In terms of biological role, catalyzes the transfer of a phosphate group to glutamate to form L-glutamate 5-phosphate. The chain is Glutamate 5-kinase from Corynebacterium jeikeium (strain K411).